We begin with the raw amino-acid sequence, 248 residues long: Triosephosphate isomerase (248 aa).

A substrate-binding site is contributed by 9-11; sequence NWK. Catalysis depends on His92, which acts as the Electrophile. Glu164 functions as the Proton acceptor in the catalytic mechanism. Substrate is bound by residues Gly170, Ser209, and 230 to 231; that span reads GG.

This sequence belongs to the triosephosphate isomerase family. In terms of assembly, homodimer.

It is found in the cytoplasm. It catalyses the reaction D-glyceraldehyde 3-phosphate = dihydroxyacetone phosphate. The protein operates within carbohydrate biosynthesis; gluconeogenesis. Its pathway is carbohydrate degradation; glycolysis; D-glyceraldehyde 3-phosphate from glycerone phosphate: step 1/1. Functionally, involved in the gluconeogenesis. Catalyzes stereospecifically the conversion of dihydroxyacetone phosphate (DHAP) to D-glyceraldehyde-3-phosphate (G3P). The polypeptide is Triosephosphate isomerase (Thiobacillus denitrificans (strain ATCC 25259 / T1)).